The sequence spans 316 residues: Small ribosomal subunit protein RACK1 (316 aa).

7 WD repeats span residues 13–44 (GHNG…IIWN), 61–91 (GHSH…RLWE), 103–133 (GHTN…KLWN), 146–178 (GHTE…KVWE), 190–220 (GHTG…MLWD), 231–260 (NAND…IIFD), and 281–311 (SREP…RAWG).

It belongs to the WD repeat G protein beta family. Ribosomal protein RACK1 subfamily. Component of the small ribosomal subunit (SSU). Mature N.crassa ribosomes consist of a small (40S) and a large (60S) subunit. The 40S small subunit contains 1 molecule of ribosomal RNA (18S rRNA) and at least 32 different proteins. The large 60S subunit contains 3 rRNA molecules (26S, 5.8S and 5S rRNA) and at least 42 different proteins.

It is found in the cytoplasm. Its function is as follows. Component of the ribosome, a large ribonucleoprotein complex responsible for the synthesis of proteins in the cell. The small ribosomal subunit (SSU) binds messenger RNAs (mRNAs) and translates the encoded message by selecting cognate aminoacyl-transfer RNA (tRNA) molecules. The large subunit (LSU) contains the ribosomal catalytic site termed the peptidyl transferase center (PTC), which catalyzes the formation of peptide bonds, thereby polymerizing the amino acids delivered by tRNAs into a polypeptide chain. The nascent polypeptides leave the ribosome through a tunnel in the LSU and interact with protein factors that function in enzymatic processing, targeting, and the membrane insertion of nascent chains at the exit of the ribosomal tunnel. Required to activate general amino acid control under conditions of amino acid limitation in the vegetative growth phase, and for formation of protoperithecia in preparation for the sexual phase of the life cycle of N.crassa. The polypeptide is Small ribosomal subunit protein RACK1 (cpc-2) (Neurospora crassa (strain ATCC 24698 / 74-OR23-1A / CBS 708.71 / DSM 1257 / FGSC 987)).